A 329-amino-acid polypeptide reads, in one-letter code: MAVTMADITKLRKMSGAGMMDCKKALTESDGDIEKAMEIIRKKGQAIAAKRSDREAAEGCVLAKKDGEFAAIIALKCETDFVAKNEDFVALTQAILDAAVANKCRTLDEVKALPMGKGTIQEAVTDRSGITGEKMELDGYCVVEGAYTTVYNHMGKNQLCTIAAFNKESEEAAHNIVMQIAAMNPIAIDEAGVPESVKEKEIQVAIEKTKAEQVQKAVEAALKKAGINPSHVDSEAHMESNMDKGWITAEDVAKAKEIIATVSAEKAANLPQQMIENIAKGRLGKFLKEVCLLNQEDIMDGKKTVRETMKEIDPELQILAFKRFTLRAE.

The involved in Mg(2+) ion dislocation from EF-Tu stretch occupies residues 79–82; that stretch reads TDFV.

The protein belongs to the EF-Ts family.

It is found in the cytoplasm. Associates with the EF-Tu.GDP complex and induces the exchange of GDP to GTP. It remains bound to the aminoacyl-tRNA.EF-Tu.GTP complex up to the GTP hydrolysis stage on the ribosome. In Parabacteroides distasonis (strain ATCC 8503 / DSM 20701 / CIP 104284 / JCM 5825 / NCTC 11152), this protein is Elongation factor Ts.